We begin with the raw amino-acid sequence, 94 residues long: Large ribosomal subunit protein bL31 (94 aa).

Residues 64-94 (KYGMANPDEDSTKNTKSSKKETSEDSSSKGS) form a disordered region. Positions 73-94 (DSTKNTKSSKKETSEDSSSKGS) are enriched in basic and acidic residues.

Belongs to the bacterial ribosomal protein bL31 family. Type A subfamily. Part of the 50S ribosomal subunit.

In terms of biological role, binds the 23S rRNA. This chain is Large ribosomal subunit protein bL31, found in Prochlorococcus marinus (strain SARG / CCMP1375 / SS120).